A 443-amino-acid chain; its full sequence is Cyclic AMP receptor 4 (443 aa).

Residues 1-11 (MKVLQEINLTY) are Extracellular-facing. The N-linked (GlcNAc...) asparagine glycan is linked to Asn8. Residues 12 to 32 (SILVIADFSSIFGCLLVLIAF) traverse the membrane as a helical segment. The Cytoplasmic segment spans residues 33–44 (KKLKLLRNHITR). A helical membrane pass occupies residues 45 to 65 (VIACFCVSSLLKDIISTGLTL). The Extracellular segment spans residues 66–89 (SLGPQNEAGSTSFQCYLYAITITY). A helical transmembrane segment spans residues 90–110 (GSLACWLWTLCLAFSIYNLIV). The Cytoplasmic portion of the chain corresponds to 111 to 119 (KREPEPEKY). The helical transmembrane segment at 120–140 (EKFYHGVCWTIPLICVIVMLA) threads the bilayer. At 141-161 (KKTIEPVGNWCWISEKYVGYR) the chain is on the extracellular side. Residues 162–182 (FGLFYGPFFAIWIISAVLVGL) form a helical membrane-spanning segment. Topologically, residues 183-208 (TSRYTYSVIRNSVSDNKDKHMTYQFK) are cytoplasmic. Residues 209 to 229 (LINYIIVFLLCWVFAIVNRIL) form a helical membrane-spanning segment. The Extracellular segment spans residues 230–263 (NGLGYYPTLPNILHTYFSVSHGFFASVTFIYNNP). Residues 264-284 (LMWRYWGSKIFLIFAKFGYFV) traverse the membrane as a helical segment. Residues 285-443 (ELQRRLDRNK…DEREKKDNKF (159 aa)) lie on the Cytoplasmic side of the membrane. Disordered regions lie at residues 325–354 (NDIS…QQSP) and 396–443 (SFEI…DNKF). The segment covering 332-352 (QQQQQQQQTPQQPQQQFQQQQ) has biased composition (low complexity). The segment covering 396–410 (SFEITQPSNDLNTIE) has biased composition (polar residues). The span at 411-425 (NNNNYNNNNNNNNNN) shows a compositional bias: low complexity. Residues 429-443 (IEKEKDEREKKDNKF) show a composition bias toward basic and acidic residues.

Belongs to the G-protein coupled receptor 5 family. Post-translationally, C-terminal Ser or Thr residues may be phosphorylated.

It localises to the membrane. Functionally, receptor for cAMP. Regulates axial patterning and cellular differentiation during late development. The activity of this receptor is mediated by G proteins. This Dictyostelium discoideum (Social amoeba) protein is Cyclic AMP receptor 4 (carD).